The sequence spans 145 residues: Fluoride-specific ion channel FluC 2 (145 aa).

4 helical membrane passes run 16-36 (MLLVFVGGALGTAARALLSAA), 42-62 (VISVITFVINVIGAFVLGWLL), 80-100 (LFAGTGVLGGFTTYSAFAVDT), and 113-133 (ILYAAATIAIGAAAYLAGIAL). Na(+)-binding residues include G88 and T91.

It belongs to the fluoride channel Fluc/FEX (TC 1.A.43) family.

It is found in the cell membrane. It catalyses the reaction fluoride(in) = fluoride(out). Its activity is regulated as follows. Na(+) is not transported, but it plays an essential structural role and its presence is essential for fluoride channel function. Its function is as follows. Fluoride-specific ion channel. Important for reducing fluoride concentration in the cell, thus reducing its toxicity. This Leifsonia xyli subsp. xyli (strain CTCB07) protein is Fluoride-specific ion channel FluC 2.